The chain runs to 358 residues: Peptide chain release factor 1 (358 aa).

Residue glutamine 233 is modified to N5-methylglutamine.

It belongs to the prokaryotic/mitochondrial release factor family. Methylated by PrmC. Methylation increases the termination efficiency of RF1.

It localises to the cytoplasm. Its function is as follows. Peptide chain release factor 1 directs the termination of translation in response to the peptide chain termination codons UAG and UAA. This Staphylococcus carnosus (strain TM300) protein is Peptide chain release factor 1.